The primary structure comprises 322 residues: MSGELPPNINIKEPRWDQSTFIGRANHFFTVTDPRNILLTNEQLESARKIVHDYRQGIVPPGLTENELWRAKYIYDSAFHPDTGEKMILIGRMSAQVPMNMTITGCMMTFYRTTPAVLFWQWINQSFNAVVNYTNRSGDAPLTVNELGTAYVSATTGAVATALGLNALTKHVSPLIGRFVPFAAVAAANCINIPLMRQRELKVGIPVTDENGNRLGESANAAKQAITQVVVSRILMAAPGMAIPPFIMNTLEKKAFLKRFPWMSAPIQVGLVGFCLVFATPLCCALFPQKSSMSVTSLEAELQAKIQESHPELRRVYFNKGL.

Ser-2 is modified (N-acetylserine). Residues 2–102 (SGELPPNINI…MSAQVPMNMT (101 aa)) lie on the Mitochondrial matrix side of the membrane. Residues 103 to 120 (ITGCMMTFYRTTPAVLFW) traverse the membrane as a helical segment. Residues 121-146 (QWINQSFNAVVNYTNRSGDAPLTVNE) are Mitochondrial intermembrane-facing. The chain crosses the membrane as a helical span at residues 147–167 (LGTAYVSATTGAVATALGLNA). Residues 168–174 (LTKHVSP) lie on the Mitochondrial matrix side of the membrane. The chain crosses the membrane as a helical span at residues 175–195 (LIGRFVPFAAVAAANCINIPL). Over 196 to 228 (MRQRELKVGIPVTDENGNRLGESANAAKQAITQ) the chain is Mitochondrial intermembrane. A helical transmembrane segment spans residues 229-249 (VVVSRILMAAPGMAIPPFIMN). The Mitochondrial matrix segment spans residues 250 to 266 (TLEKKAFLKRFPWMSAP). Residues 267-287 (IQVGLVGFCLVFATPLCCALF) form a helical membrane-spanning segment. The Mitochondrial intermembrane portion of the chain corresponds to 288–322 (PQKSSMSVTSLEAELQAKIQESHPELRRVYFNKGL).

The protein belongs to the sideroflexin family. Highly expressed in tissues with high one-carbon metabolism activity, such as blood, liver and kidney.

The protein resides in the mitochondrion inner membrane. The catalysed reaction is L-serine(in) = L-serine(out). The enzyme catalyses L-alanine(in) = L-alanine(out). It catalyses the reaction L-cysteine(in) = L-cysteine(out). In terms of biological role, amino acid transporter importing serine, an essential substrate of the mitochondrial branch of the one-carbon pathway, into mitochondria. Mitochondrial serine is then converted to glycine and formate, which exits to the cytosol where it is used to generate the charged folates that serve as one-carbon donors. May also transport other amino acids including alanine and cysteine. The polypeptide is Sideroflexin-1 (Homo sapiens (Human)).